The chain runs to 155 residues: Ribosomal RNA large subunit methyltransferase H (155 aa).

Residues I71, G103, and 122 to 127 (FGRMVW) each bind S-adenosyl-L-methionine.

This sequence belongs to the RNA methyltransferase RlmH family. In terms of assembly, homodimer.

The protein localises to the cytoplasm. It catalyses the reaction pseudouridine(1915) in 23S rRNA + S-adenosyl-L-methionine = N(3)-methylpseudouridine(1915) in 23S rRNA + S-adenosyl-L-homocysteine + H(+). In terms of biological role, specifically methylates the pseudouridine at position 1915 (m3Psi1915) in 23S rRNA. This Cereibacter sphaeroides (strain ATCC 17025 / ATH 2.4.3) (Rhodobacter sphaeroides) protein is Ribosomal RNA large subunit methyltransferase H.